The primary structure comprises 426 residues: Glutamate-1-semialdehyde 2,1-aminomutase (426 aa).

Position 265 is an N6-(pyridoxal phosphate)lysine (K265).

This sequence belongs to the class-III pyridoxal-phosphate-dependent aminotransferase family. HemL subfamily. Homodimer. Pyridoxal 5'-phosphate serves as cofactor.

The protein localises to the cytoplasm. It catalyses the reaction (S)-4-amino-5-oxopentanoate = 5-aminolevulinate. Its pathway is porphyrin-containing compound metabolism; protoporphyrin-IX biosynthesis; 5-aminolevulinate from L-glutamyl-tRNA(Glu): step 2/2. This is Glutamate-1-semialdehyde 2,1-aminomutase from Hahella chejuensis (strain KCTC 2396).